Consider the following 144-residue polypeptide: Heme transporter hrg1-B (144 aa).

4 helical membrane-spanning segments follow: residues 6 to 26 (IYIS…AFIV), 38 to 58 (AMGG…IMYI), 71 to 91 (FFMF…ATFI), and 107 to 127 (FYLS…LGLY). Residues 140–141 (IL) carry the Di-leucine motif motif.

It belongs to the HRG family.

Its subcellular location is the endosome membrane. It is found in the lysosome membrane. The protein resides in the cytoplasmic vesicle. It localises to the phagosome membrane. It carries out the reaction heme b(in) = heme b(out). Functionally, heme transporter that regulates intracellular heme availability through the endosomal or lysosomal compartment. In macrophages, is the heme transporter for heme-iron recycling. Essential for macrophage iron homeostasis, transports heme from the phagolysosome to the cytoplasm during erythrophagocytosis (EP). The sequence is that of Heme transporter hrg1-B (slc48a1a) from Danio rerio (Zebrafish).